Here is a 226-residue protein sequence, read N- to C-terminus: 7-cyano-7-deazaguanine synthase (226 aa).

8-18 (ISGGLDSTTCL) contacts ATP. Residues Cys188, Cys198, Cys201, and Cys204 each contribute to the Zn(2+) site.

Belongs to the QueC family. Requires Zn(2+) as cofactor.

It catalyses the reaction 7-carboxy-7-deazaguanine + NH4(+) + ATP = 7-cyano-7-deazaguanine + ADP + phosphate + H2O + H(+). It functions in the pathway purine metabolism; 7-cyano-7-deazaguanine biosynthesis. Its function is as follows. Catalyzes the ATP-dependent conversion of 7-carboxy-7-deazaguanine (CDG) to 7-cyano-7-deazaguanine (preQ(0)). In Coxiella burnetii (strain RSA 493 / Nine Mile phase I), this protein is 7-cyano-7-deazaguanine synthase.